Here is a 95-residue protein sequence, read N- to C-terminus: Large ribosomal subunit protein eL37x (95 aa).

Residues Cys-19, Cys-22, Cys-34, and Cys-37 each contribute to the Zn(2+) site. The C4-type zinc finger occupies 19–37 (CVRCGRRSFHIQKSRCSAC). The disordered stretch occupies residues 73-95 (RFKTGFREGTEAKPRSKASASSA). Over residues 77–86 (GFREGTEAKP) the composition is skewed to basic and acidic residues.

Belongs to the eukaryotic ribosomal protein eL37 family. Zn(2+) serves as cofactor.

In terms of biological role, binds to the 23S rRNA. In Arabidopsis thaliana (Mouse-ear cress), this protein is Large ribosomal subunit protein eL37x (RPL37C).